Consider the following 203-residue polypeptide: Proteasome subunit beta 1 (203 aa).

Positions methionine 1–glycine 7 are cleaved as a propeptide — removed in mature form; by autocatalysis. The active-site Nucleophile is threonine 8.

This sequence belongs to the peptidase T1B family. The 20S proteasome core is composed of 14 alpha and 14 beta subunits that assemble into four stacked heptameric rings, resulting in a barrel-shaped structure. The two inner rings, each composed of seven catalytic beta subunits, are sandwiched by two outer rings, each composed of seven alpha subunits. The catalytic chamber with the active sites is on the inside of the barrel. Has a gated structure, the ends of the cylinder being occluded by the N-termini of the alpha-subunits. Is capped at one or both ends by the proteasome regulatory ATPase, PAN.

It is found in the cytoplasm. It carries out the reaction Cleavage of peptide bonds with very broad specificity.. The formation of the proteasomal ATPase PAN-20S proteasome complex, via the docking of the C-termini of PAN into the intersubunit pockets in the alpha-rings, triggers opening of the gate for substrate entry. Interconversion between the open-gate and close-gate conformations leads to a dynamic regulation of the 20S proteasome proteolysis activity. Component of the proteasome core, a large protease complex with broad specificity involved in protein degradation. The chain is Proteasome subunit beta 1 from Thermococcus kodakarensis (strain ATCC BAA-918 / JCM 12380 / KOD1) (Pyrococcus kodakaraensis (strain KOD1)).